The primary structure comprises 782 residues: Protein NEDD1 (782 aa).

8 WD repeats span residues 1–34 (MMSN…GDPC), 41–80 (SPGC…LGTV), 90–130 (SAEE…CIKK), 133–172 (GHTS…RATE), 176–216 (PNGQ…PKMS), 220–260 (QHSA…SSSC), 262–301 (AYEA…QPVT), and 307–358 (SNSE…TPSA). 2 disordered regions span residues 350 to 393 (PLPS…WPSG) and 467 to 512 (PIFD…EAWG). Composition is skewed to polar residues over residues 352–362 (PSTTPSASQSA), 370–386 (VSAS…TPNR), and 488–498 (SFGSITPTASS). A coiled-coil region spans residues 753–782 (VLSSILENQAEQMKELKLLRKENQELRQRL).

As to expression, expressed in root meristematic cells.

It is found in the nucleus envelope. The protein localises to the chromosome. It localises to the centromere. Its subcellular location is the kinetochore. The protein resides in the cytoplasm. It is found in the cytoskeleton. The protein localises to the phragmoplast. It localises to the microtubule organizing center. Its function is as follows. Regulates microtubules organization in a centrosome-independent manner. Required for the spindle to be positioned correctly and for the function of gamma-tubulin in organizing phragmoplast microtubules. Component of active gamma-tubulin ring complexes (gamma-TuRCs) associated with cortical microtubules in interphase cells. Mediates gamma-TuRC recruitment to the nucleation sites and is important for determining the ratio of branched to parallel nucleation. May mediate the localization of GCP2 and GCP3 to the nuclear envelope. In Arabidopsis thaliana (Mouse-ear cress), this protein is Protein NEDD1.